Here is a 218-residue protein sequence, read N- to C-terminus: MYLDTKNLTASSTSALTAATASNSKSTRRMRNVWKPLSRLLKVGGKGRTAQATLAHPNNVDLNNTQQQQQQQQQELLIEDDTKSTPEESIHKYGLELRQLPEEEQVSLTQPPNTPTLISSVHVDKVSAQSCGNCQHGRNCQHRHHSSSNINSSSSSSNMNSSSATQLPSNLWDLQLPLQYISTDNGTFFWANTQDRVDDDLLHALLCQSFSQLPGTLC.

The span at 1–25 (MYLDTKNLTASSTSALTAATASNSK) shows a compositional bias: low complexity. 3 disordered regions span residues 1–30 (MYLDTKNLTASSTSALTAATASNSKSTRRM), 64–86 (NTQQQQQQQQQELLIEDDTKSTP), and 137–164 (GRNCQHRHHSSSNINSSSSSSNMNSSSA). Over residues 147–163 (SSNINSSSSSSNMNSSS) the composition is skewed to low complexity.

Functionally, part of the Notch signaling pathway. The polypeptide is Enhancer of split M2 protein (Drosophila melanogaster (Fruit fly)).